The sequence spans 555 residues: Putative polyketide hydroxylase (555 aa).

FAD contacts are provided by residues 16–45 (PVLV…LVER) and 303–313 (YRAGRVFLAGD). A disordered region spans residues 366–395 (ATTARAAARSAEHSHPGFAPPPGTSGGPQG).

The protein belongs to the PheA/TfdB FAD monooxygenase family. FAD is required as a cofactor.

Functionally, involved in developmentally regulated synthesis of a compound biosynthetically related to polyketide antibiotics which is essential for spore color in Streptomyces halstedii. The chain is Putative polyketide hydroxylase (schC) from Streptomyces halstedii.